A 540-amino-acid polypeptide reads, in one-letter code: Glucose-6-phosphate isomerase (540 aa).

The active-site Proton donor is glutamate 350. Active-site residues include histidine 381 and lysine 503.

The protein belongs to the GPI family.

The protein localises to the cytoplasm. It catalyses the reaction alpha-D-glucose 6-phosphate = beta-D-fructose 6-phosphate. Its pathway is carbohydrate biosynthesis; gluconeogenesis. It participates in carbohydrate degradation; glycolysis; D-glyceraldehyde 3-phosphate and glycerone phosphate from D-glucose: step 2/4. Functionally, catalyzes the reversible isomerization of glucose-6-phosphate to fructose-6-phosphate. The protein is Glucose-6-phosphate isomerase of Paraburkholderia xenovorans (strain LB400).